The following is a 105-amino-acid chain: uncharacterized protein (105 aa).

S2 bears the N-acetylserine mark.

This is an uncharacterized protein from Saccharomyces cerevisiae (strain ATCC 204508 / S288c) (Baker's yeast).